Reading from the N-terminus, the 155-residue chain is MSRRSIIEKKTIKSDPIYRNRLVNMMVNRILKNGKKSLAYRIFYKAMKNIKQKTKKNPLSILRQAIHRVTPNVTIKARRVGGSTYQVPVEIKSAQGKALAICWLLRASKKRLGRNMAFKLSYELIDAARDSGEAIRKKEETHRMAEANRAFAHFR.

This sequence belongs to the universal ribosomal protein uS7 family. Part of the 30S ribosomal subunit.

The protein localises to the plastid. The protein resides in the chloroplast. One of the primary rRNA binding proteins, it binds directly to 16S rRNA where it nucleates assembly of the head domain of the 30S subunit. This chain is Small ribosomal subunit protein uS7c (rps7), found in Physcomitrium patens (Spreading-leaved earth moss).